A 121-amino-acid chain; its full sequence is Large ribosomal subunit protein uL18 (121 aa).

This sequence belongs to the universal ribosomal protein uL18 family. As to quaternary structure, part of the 50S ribosomal subunit; part of the 5S rRNA/L5/L18/L25 subcomplex. Contacts the 5S and 23S rRNAs.

This is one of the proteins that bind and probably mediate the attachment of the 5S RNA into the large ribosomal subunit, where it forms part of the central protuberance. In Pelobacter propionicus (strain DSM 2379 / NBRC 103807 / OttBd1), this protein is Large ribosomal subunit protein uL18.